The sequence spans 260 residues: Hydroxyethylthiazole kinase 1 (260 aa).

Methionine 39 contributes to the substrate binding site. Residues arginine 115 and threonine 160 each contribute to the ATP site. Residue glycine 187 coordinates substrate.

Belongs to the Thz kinase family. Mg(2+) serves as cofactor.

It carries out the reaction 5-(2-hydroxyethyl)-4-methylthiazole + ATP = 4-methyl-5-(2-phosphooxyethyl)-thiazole + ADP + H(+). It functions in the pathway cofactor biosynthesis; thiamine diphosphate biosynthesis; 4-methyl-5-(2-phosphoethyl)-thiazole from 5-(2-hydroxyethyl)-4-methylthiazole: step 1/1. Its function is as follows. Catalyzes the phosphorylation of the hydroxyl group of 4-methyl-5-beta-hydroxyethylthiazole (THZ). The chain is Hydroxyethylthiazole kinase 1 from Streptococcus pneumoniae serotype 19F (strain G54).